Consider the following 324-residue polypeptide: Mating-type protein A-3 (324 aa).

The segment at residues 147–215 (TSRPRNQFVL…RHRAENPHLY (69 aa)) is a DNA-binding region (HMG box).

It localises to the nucleus. Its function is as follows. Required, together with mating-type protein A-2, for efficient ascospore formation. In Neurospora crassa (strain ATCC 24698 / 74-OR23-1A / CBS 708.71 / DSM 1257 / FGSC 987), this protein is Mating-type protein A-3 (mtA-3).